The following is a 388-amino-acid chain: Succinate--CoA ligase [ADP-forming] subunit beta (388 aa).

The region spanning 9-244 (KEILRKYNVP…LDEEDANEIE (236 aa)) is the ATP-grasp domain. Residues lysine 46, 53–55 (GRG), glutamate 99, alanine 102, and glutamate 107 contribute to the ATP site. Positions 199 and 213 each coordinate Mg(2+). Residues asparagine 264 and 321 to 323 (GIM) contribute to the substrate site.

This sequence belongs to the succinate/malate CoA ligase beta subunit family. As to quaternary structure, heterotetramer of two alpha and two beta subunits. It depends on Mg(2+) as a cofactor.

The enzyme catalyses succinate + ATP + CoA = succinyl-CoA + ADP + phosphate. It catalyses the reaction GTP + succinate + CoA = succinyl-CoA + GDP + phosphate. The protein operates within carbohydrate metabolism; tricarboxylic acid cycle; succinate from succinyl-CoA (ligase route): step 1/1. Functionally, succinyl-CoA synthetase functions in the citric acid cycle (TCA), coupling the hydrolysis of succinyl-CoA to the synthesis of either ATP or GTP and thus represents the only step of substrate-level phosphorylation in the TCA. The beta subunit provides nucleotide specificity of the enzyme and binds the substrate succinate, while the binding sites for coenzyme A and phosphate are found in the alpha subunit. In Cupriavidus taiwanensis (strain DSM 17343 / BCRC 17206 / CCUG 44338 / CIP 107171 / LMG 19424 / R1) (Ralstonia taiwanensis (strain LMG 19424)), this protein is Succinate--CoA ligase [ADP-forming] subunit beta.